The sequence spans 490 residues: Metal cation symporter ZIP14 (490 aa).

Residues 1-28 form the signal peptide; it reads MKLLHPAFQSCLLLTLLGLWRTTPEAHA. Over 29-155 the chain is Extracellular; sequence SSPGAPAISA…PSAVEVWGYG (127 aa). Residues asparagine 75, asparagine 85, and asparagine 100 are each glycosylated (N-linked (GlcNAc...) asparagine). The chain crosses the membrane as a helical span at residues 156–176; the sequence is LLCVTVISLCSLLGASVVPFM. Residues 177-184 lie on the Cytoplasmic side of the membrane; the sequence is KKTFYKRL. A helical transmembrane segment spans residues 185–205; the sequence is LLYFIALAIGTLYSNALFQLI. At 206–222 the chain is on the extracellular side; that stretch reads PEAFGFNPLEDYYVSKS. The helical transmembrane segment at 223–243 threads the bilayer; it reads AVVFGGFYLFFFTEKILKILL. Over 244–395 the chain is Cytoplasmic; it reads KQKNEHHHGH…LLNAGMSIQQ (152 aa). An HHHGHXHX-motif motif is present at residues 249–256; that stretch reads HHHGHSHY. An XEXPHE-motif motif is present at residues 374–379; the sequence is EEFPHE. Residues 396 to 416 form a helical membrane-spanning segment; that stretch reads ALFFNFLSACCCYLGLAFGIL. The Extracellular segment spans residues 417-422; sequence AGSHFS. The chain crosses the membrane as a helical span at residues 423-443; it reads ANWIFALAGGMFLYISLADMF. At 444–458 the chain is on the cytoplasmic side; the sequence is PEMNEVCQEDERKGS. The helical transmembrane segment at 459–479 threads the bilayer; the sequence is ILIPFVIQNLGLLTGFTIMVV. The Extracellular segment spans residues 480–490; sequence LTMYSGQIQIG.

This sequence belongs to the ZIP transporter (TC 2.A.5) family. In terms of assembly, homotrimer. Post-translationally, ubiquitinated. Ubiquitination occurs upon iron depletion. The ubiquitinated form undergoes proteasomal degradation. In terms of processing, N-glycosylated. N-glycosylation at Asn-100 is required for iron-regulated extraction of the transporter from membranes and subsequent proteasomal degradation.

It localises to the cell membrane. The protein resides in the apical cell membrane. It is found in the basolateral cell membrane. The protein localises to the early endosome membrane. Its subcellular location is the late endosome membrane. It localises to the lysosome membrane. It catalyses the reaction Zn(2+)(out) + 2 hydrogencarbonate(out) = Zn(2+)(in) + 2 hydrogencarbonate(in). The catalysed reaction is Mn(2+)(out) + 2 hydrogencarbonate(out) = Mn(2+)(in) + 2 hydrogencarbonate(in). The enzyme catalyses Fe(2+)(out) + 2 hydrogencarbonate(out) = Fe(2+)(in) + 2 hydrogencarbonate(in). It carries out the reaction Cd(2+)(out) + 2 hydrogencarbonate(out) = Cd(2+)(in) + 2 hydrogencarbonate(in). In terms of biological role, electroneutral transporter of the plasma membrane mediating the cellular uptake of the divalent metal cations zinc, manganese and iron that are important for tissue homeostasis, metabolism, development and immunity. Functions as an energy-dependent symporter, transporting through the membranes an electroneutral complex composed of a divalent metal cation and two bicarbonate anions. Beside these endogenous cellular substrates, can also import cadmium a non-essential metal which is cytotoxic and carcinogenic. Controls the cellular uptake by the intestinal epithelium of systemic zinc, which is in turn required to maintain tight junctions and the intestinal permeability. Modifies the activity of zinc-dependent phosphodiesterases, thereby indirectly regulating G protein-coupled receptor signaling pathways important for gluconeogenesis and chondrocyte differentiation. Regulates insulin receptor signaling, glucose uptake, glycogen synthesis and gluconeogenesis in hepatocytes through the zinc-dependent intracellular catabolism of insulin. Through zinc cellular uptake also plays a role in the adaptation of cells to endoplasmic reticulum stress. Major manganese transporter of the basolateral membrane of intestinal epithelial cells, it plays a central role in manganese systemic homeostasis through intestinal manganese uptake. Also involved in manganese extracellular uptake by cells of the blood-brain barrier. May also play a role in manganese and zinc homeostasis participating in their elimination from the blood through the hepatobiliary excretion. Also functions in the extracellular uptake of free iron. May also function intracellularly and mediate the transport from endosomes to cytosol of iron endocytosed by transferrin. Plays a role in innate immunity by regulating the expression of cytokines by activated macrophages. The sequence is that of Metal cation symporter ZIP14 from Pongo abelii (Sumatran orangutan).